An 88-amino-acid chain; its full sequence is uncharacterized protein (88 aa).

The N-terminal stretch at 1–22 (MGLTLKEHAEVCMALAESSASA) is a signal peptide.

This is an uncharacterized protein from Haemophilus influenzae (strain ATCC 51907 / DSM 11121 / KW20 / Rd).